Reading from the N-terminus, the 647-residue chain is 5-aminolevulinate synthase, non-specific, mitochondrial (647 aa).

The N-terminal 56 residues, 1–56, are a transit peptide targeting the mitochondrion; that stretch reads METVVRRCPFLSRVPQAFLQKAGKSLLFYAQNCPKMMEIGAKPAPRALSTSAVLCQ. Positions 61–112 are disordered; it reads TPPANEKDKAAKAEVQQAPDGSQQAPDGSQQTADGTQLPSGHPSLASSQGTG. The segment covering 79–112 has biased composition (polar residues); that stretch reads PDGSQQAPDGSQQTADGTQLPSGHPSLASSQGTG. 3 residues coordinate substrate: Arg224, Ser341, and Lys360. The pyridoxal 5'-phosphate site is built by Ser393, His421, and Thr449. Residue Lys452 is part of the active site. Lys452 bears the N6-(pyridoxal phosphate)lysine mark. Pyridoxal 5'-phosphate-binding residues include Thr481 and Thr482. Position 569 (Thr569) interacts with substrate. Residue Pro583 is modified to Hydroxyproline.

This sequence belongs to the class-II pyridoxal-phosphate-dependent aminotransferase family. In terms of assembly, homodimer. Interacts (hydroxylated form) with VHL. Pyridoxal 5'-phosphate is required as a cofactor. In terms of processing, in normoxia, is hydroxylated at Pro-583, promoting interaction with VHL, initiating ubiquitination and subsequent degradation via the proteasome. Post-translationally, ubiquitinated; in normoxia following hydroxylation and interaction with VHL, leading to its subsequent degradation via the proteasome.

The protein resides in the mitochondrion inner membrane. The enzyme catalyses succinyl-CoA + glycine + H(+) = 5-aminolevulinate + CO2 + CoA. It participates in porphyrin-containing compound metabolism; protoporphyrin-IX biosynthesis; 5-aminolevulinate from glycine: step 1/1. Functionally, catalyzes the pyridoxal 5'-phosphate (PLP)-dependent condensation of succinyl-CoA and glycine to form aminolevulinic acid (ALA), with CoA and CO2 as by-products. The chain is 5-aminolevulinate synthase, non-specific, mitochondrial (ALAS1) from Bos taurus (Bovine).